Here is a 156-residue protein sequence, read N- to C-terminus: MPRRRVIGQRKILPDPKFGSELLAKFVNILMVDGKKSTAEAIVYTALETLAQRSGKGHLEAFEVALDNVRPTVEVKSRRVGGSTYQVPVEVRPVRRNALAMRWIVEAARKRGDKSMALRLANELSDAAENKGTAVKKREDVHRMAEANKAFAHYRW.

Belongs to the universal ribosomal protein uS7 family. As to quaternary structure, part of the 30S ribosomal subunit. Contacts proteins S9 and S11.

Functionally, one of the primary rRNA binding proteins, it binds directly to 16S rRNA where it nucleates assembly of the head domain of the 30S subunit. Is located at the subunit interface close to the decoding center, probably blocks exit of the E-site tRNA. The protein is Small ribosomal subunit protein uS7 of Pectobacterium atrosepticum (strain SCRI 1043 / ATCC BAA-672) (Erwinia carotovora subsp. atroseptica).